A 520-amino-acid polypeptide reads, in one-letter code: 2-isopropylmalate synthase (520 aa).

Positions 12–274 (IRIFDTTLRD…DSAINTPRIV (263 aa)) constitute a Pyruvate carboxyltransferase domain. Mn(2+)-binding residues include Asp-21, His-209, His-211, and Asn-245. Positions 396–520 (RLASMTISDV…VIAGKTAAVA (125 aa)) are regulatory domain.

This sequence belongs to the alpha-IPM synthase/homocitrate synthase family. LeuA type 1 subfamily. In terms of assembly, homodimer. The cofactor is Mn(2+).

Its subcellular location is the cytoplasm. It catalyses the reaction 3-methyl-2-oxobutanoate + acetyl-CoA + H2O = (2S)-2-isopropylmalate + CoA + H(+). It participates in amino-acid biosynthesis; L-leucine biosynthesis; L-leucine from 3-methyl-2-oxobutanoate: step 1/4. In terms of biological role, catalyzes the condensation of the acetyl group of acetyl-CoA with 3-methyl-2-oxobutanoate (2-ketoisovalerate) to form 3-carboxy-3-hydroxy-4-methylpentanoate (2-isopropylmalate). The sequence is that of 2-isopropylmalate synthase from Xanthomonas oryzae pv. oryzae (strain MAFF 311018).